Reading from the N-terminus, the 561-residue chain is Nephronectin (561 aa).

The signal sequence occupies residues 1-19 (MAVLLAAVLASSLYLQVAA). The region spanning 52–87 (SWGQCQPVCQPQCKHGECVGPNKCKCHPGFAGKTCN) is the EGF-like 1 domain. Intrachain disulfides connect Cys-56-Cys-69, Cys-60-Cys-75, Cys-77-Cys-86, Cys-93-Cys-104, Cys-100-Cys-113, and Cys-115-Cys-127. The EGF-like 2; calcium-binding domain occupies 89–128 (DLNECGLKPRPCKHRCMNTFGSYKCYCLNGYMLLPDGSCS). The EGF-like 3 domain occupies 132–168 (SCSMANCQYGCDVVKGQVRCQCPSPGLQLAPDGRTCV). The EGF-like 4; calcium-binding domain maps to 169-213 (DIDECATGRVSCPRFRQCVNTFGSYICKCHTGFDLMYIGGKYQCH). Cystine bridges form between Cys-173/Cys-186, Cys-180/Cys-195, Cys-197/Cys-212, Cys-218/Cys-231, Cys-225/Cys-240, and Cys-242/Cys-253. An EGF-like 5; calcium-binding domain is found at 214–254 (DIDECSLGQHQCSSYARCYNIHGSYKCQCRDGYEGDGLNCV). Residues 266-370 (PIHMPERNGT…TSTTTRVITV (105 aa)) form a disordered region. A compositionally biased stretch (low complexity) spans 307–316 (TNRPTSKPTT). The segment covering 317–348 (RPTPNPTPQPTPPPPPPLPTEPRTTPLPPTPE) has biased composition (pro residues). The span at 352 to 366 (TRPTTIAPATSTTTR) shows a compositional bias: low complexity. Positions 382 to 384 (RGD) match the Integrin interaction motif. One can recognise an MAM domain in the interval 420 to 561 (HSCNFDHGLC…DDVSLKRGRC (142 aa)).

Belongs to the nephronectin family. In terms of assembly, homodimer and homotrimer. In terms of tissue distribution, expressed in kidney (at protein level).

The protein resides in the secreted. Its subcellular location is the extracellular space. It localises to the extracellular matrix. Functional ligand of integrin alpha-8/beta-1 in kidney development. Regulates the expression of GDNF with integrin alpha-8/beta-1 which is essential for kidney development. May also play a role in the development and function of various tissues, regulating cell adhesion, spreading and survival through the binding of several integrins. The sequence is that of Nephronectin (Npnt) from Mus musculus (Mouse).